We begin with the raw amino-acid sequence, 312 residues long: MKKLLVKELIEQFQDCVNLIDGHTNTSNVIRVPGLKRVVFEMLGLFSSQIGSVAILGKREFGFLSQKTLVEQQQILHNLLKLNPPAIILTKSFTDPTVLLQVNQTYQVPILKTDFFSTELSFTVETYINEQFATVAQIHGVLLEVFGVGVLLTGRSGIGKSECALDLINKNHLFVGDDAIEIYRLGNRLFGRAQEVAKKFMEIRGLGIINVERFYGLQITKQRTEIQLMVNLLSLEKQTTVTFERLGTELKKQRLLGVDLSFYEIPISPGRKTSEIIESAVIDFKLKHSGYNSALDFIENQKAILKRKKDES.

Active-site residues include histidine 139 and lysine 160. 154–161 provides a ligand contact to ATP; the sequence is GRSGIGKS. A Mg(2+)-binding site is contributed by serine 161. The active-site Proton acceptor; for phosphorylation activity. Proton donor; for dephosphorylation activity is the aspartate 178. The tract at residues 201–210 is important for the catalytic mechanism of both phosphorylation and dephosphorylation; the sequence is MEIRGLGIIN. Glutamate 202 serves as a coordination point for Mg(2+). Residue arginine 245 is part of the active site. Positions 266–271 are important for the catalytic mechanism of dephosphorylation; the sequence is PISPGR.

The protein belongs to the HPrK/P family. In terms of assembly, homohexamer, arranged as bilayered trimers. It depends on Mg(2+) as a cofactor.

It catalyses the reaction [HPr protein]-L-serine + ATP = [HPr protein]-O-phospho-L-serine + ADP + H(+). The enzyme catalyses [HPr protein]-O-phospho-L-serine + phosphate + H(+) = [HPr protein]-L-serine + diphosphate. Its activity is regulated as follows. Contrary to HPrK/P of B.subtilis and other bacteria, that of M.pneumoniae is active as a kinase at very low ATP concentrations in the absence of fructose 1,6-bisphosphate (FBP). Kinase activity is slightly activated by FBP, and inhibited by inorganic phosphate (Pi), but FBP prevents kinase inhibition by Pi. Dephosphorylation of P-Ser-HPr by M.pneumoniae HPrK/P is strictly dependent on the presence of Pi, and is inhibited by FBP. This unique mode of control of HPrK/P activity is proposed to reflect the parasitic lifestyle of M.pneumoniae, that is strictly adapted to its ecological niche on nutrient-rich human mucous membranes. Functionally, is a metabolite-sensitive enzyme that catalyzes the ATP-as well as probably the pyrophosphate-dependent phosphorylation of Ser-47 in HPr, a phosphocarrier protein of the phosphoenolpyruvate-dependent sugar phosphotransferase system (PTS). HprK/P also catalyzes the pyrophosphate-producing, inorganic phosphate-dependent dephosphorylation (phosphorolysis) of seryl-phosphorylated HPr (P-Ser-HPr). The regulatory role of HPrK/P in the physiology of M.pneumoniae is not known yet. The polypeptide is HPr kinase/phosphorylase (hprK) (Mycoplasma pneumoniae (strain ATCC 29342 / M129 / Subtype 1) (Mycoplasmoides pneumoniae)).